Consider the following 459-residue polypeptide: Fe(3+)-Zn(2+) purple acid phosphatase (459 aa).

A signal peptide spans 1–22 (MGVVKGLLALALVLNVVVVSNG). Position 23 is a blocked amino end (Gly) (Gly23). Asn108 carries an N-linked (GlcNAc...) asparagine; partial glycan. N-linked (GlcNAc...) asparagine glycosylation is present at Asn136. Residue Asp162 participates in Fe cation binding. Residue Asn170 is glycosylated (N-linked (GlcNAc...) asparagine). 2 residues coordinate Fe cation: Asp191 and Tyr194. Asp191 contributes to the Zn(2+) binding site. Asn228 is a Zn(2+) binding site. N-linked (GlcNAc...) asparagine glycosylation is present at Asn238. His313 serves as a coordination point for Zn(2+). His323 serves as the catalytic Proton donor. His350 is a binding site for Zn(2+). His352 contributes to the Fe cation binding site. N-linked (GlcNAc...) asparagine glycosylation is present at Asn423.

The protein belongs to the metallophosphoesterase superfamily. Purple acid phosphatase family. Homodimer; disulfide-linked. Fe cation serves as cofactor. It depends on Zn(2+) as a cofactor.

Its subcellular location is the secreted. It carries out the reaction a phosphate monoester + H2O = an alcohol + phosphate. With respect to regulation, inhibited by compounds CC24201, CC27209, and MO07123. Inhibited by the tetraoxoanions molybdate and phosphate. Not inhibited by EDTA or tartrate. The chain is Fe(3+)-Zn(2+) purple acid phosphatase from Phaseolus vulgaris (Kidney bean).